The sequence spans 417 residues: Serine hydroxymethyltransferase (417 aa).

(6S)-5,6,7,8-tetrahydrofolate contacts are provided by residues leucine 112 and 116-118 (GHL). Position 221 is an N6-(pyridoxal phosphate)lysine (lysine 221). Glutamate 247 is a (6S)-5,6,7,8-tetrahydrofolate binding site.

Belongs to the SHMT family. In terms of assembly, homodimer. Requires pyridoxal 5'-phosphate as cofactor.

The protein resides in the cytoplasm. It carries out the reaction (6R)-5,10-methylene-5,6,7,8-tetrahydrofolate + glycine + H2O = (6S)-5,6,7,8-tetrahydrofolate + L-serine. The protein operates within one-carbon metabolism; tetrahydrofolate interconversion. Its pathway is amino-acid biosynthesis; glycine biosynthesis; glycine from L-serine: step 1/1. In terms of biological role, catalyzes the reversible interconversion of serine and glycine with tetrahydrofolate (THF) serving as the one-carbon carrier. This reaction serves as the major source of one-carbon groups required for the biosynthesis of purines, thymidylate, methionine, and other important biomolecules. Also exhibits THF-independent aldolase activity toward beta-hydroxyamino acids, producing glycine and aldehydes, via a retro-aldol mechanism. The sequence is that of Serine hydroxymethyltransferase from Borrelia hermsii (strain HS1 / DAH).